The sequence spans 232 residues: 2-C-methyl-D-erythritol 4-phosphate cytidylyltransferase (232 aa).

This sequence belongs to the IspD/TarI cytidylyltransferase family. IspD subfamily.

It carries out the reaction 2-C-methyl-D-erythritol 4-phosphate + CTP + H(+) = 4-CDP-2-C-methyl-D-erythritol + diphosphate. Its pathway is isoprenoid biosynthesis; isopentenyl diphosphate biosynthesis via DXP pathway; isopentenyl diphosphate from 1-deoxy-D-xylulose 5-phosphate: step 2/6. Its function is as follows. Catalyzes the formation of 4-diphosphocytidyl-2-C-methyl-D-erythritol from CTP and 2-C-methyl-D-erythritol 4-phosphate (MEP). This is 2-C-methyl-D-erythritol 4-phosphate cytidylyltransferase from Rhodococcus erythropolis (strain PR4 / NBRC 100887).